The primary structure comprises 529 residues: Zinc finger protein 572 (529 aa).

Positions 1 to 125 are disordered; the sequence is MEQEQKLLVS…TGPAGQQNPS (125 aa). A Glycyl lysine isopeptide (Lys-Gly) (interchain with G-Cter in SUMO2) cross-link involves residue Lys6. A compositionally biased stretch (polar residues) spans 22–42; it reads KNTITGDESKNNLKTVQFSNS. Positions 43–68 are enriched in basic and acidic residues; sequence KADKERASKWSRSDGPENYKDEDTKE. A compositionally biased stretch (polar residues) spans 87–96; sequence NDSNLGSQRN. 12 C2H2-type zinc fingers span residues 131–153, 159–181, 187–209, 215–237, 243–265, 271–293, 299–321, 327–349, 383–405, 411–433, 439–461, and 467–489; these read YKCS…QRTH, YRCS…LRTH, YQCG…ERTH, YKCP…HRSH, YECP…QRTH, YKCP…QRTH, YKCP…QRIH, YQCI…QKMH, YKCC…QRTH, YRCS…QRTH, YKCP…RRTH, and YKCT…RKIH.

Belongs to the krueppel C2H2-type zinc-finger protein family.

The protein localises to the nucleus. Its function is as follows. May be involved in transcriptional regulation. The sequence is that of Zinc finger protein 572 (ZNF572) from Bos taurus (Bovine).